The primary structure comprises 166 residues: Cofilin-1 (166 aa).

A2 is subject to N-acetylalanine. S3 carries the phosphoserine; by NRK modification. Residues 4–153 (GVAVSDGVIK…KDRCTLAEKL (150 aa)) form the ADF-H domain. S8 carries the post-translational modification Phosphoserine. An N6-acetyllysine modification is found at K13. A Phosphothreonine modification is found at T25. The Nuclear localization signal signature appears at 30–34 (KKRKK). S41 is subject to Phosphoserine. A Phosphothreonine modification is found at T63. Y68 carries the post-translational modification Phosphotyrosine. Residue K73 is modified to N6-acetyllysine. At Y82 the chain carries Phosphotyrosine. S108 is modified (phosphoserine). Residue K132 forms a Glycyl lysine isopeptide (Lys-Gly) (interchain with G-Cter in SUMO2) linkage. Y140 bears the Phosphotyrosine mark. An N6-acetyllysine modification is found at K144. The residue at position 156 (S156) is a Phosphoserine.

It belongs to the actin-binding proteins ADF family. As to quaternary structure, can bind G- and F-actin in a 1:1 ratio of cofilin to actin. It is a major component of intranuclear and cytoplasmic actin rods. Interacts with the subcortical maternal complex (SCMC) via interaction with TLE6 isoform 1 and NLRP5. Interacts with C9orf72. (Microbial infection) Interacts with human respiratory syncytial virus (HRSV) matrix protein; this interaction probably facilitates viral replication. In terms of processing, inactivated by phosphorylation on Ser-3. Phosphorylated on Ser-3 in resting cells. Dephosphorylated by PDXP/chronophin; this restores its activity in promoting actin filament depolymerization. The phosphorylation of Ser-24 may prevent recognition of the nuclear localization signal. Phosphorylated via a ARRB1-RAC1-LIMK1-PAK1 cascade upon active ligand stimulation of atypical chemokine receptor ACKR2. In terms of tissue distribution, widely distributed in various tissues.

Its subcellular location is the nucleus matrix. It localises to the cytoplasm. The protein localises to the cytoskeleton. The protein resides in the cell projection. It is found in the ruffle membrane. Its subcellular location is the lamellipodium membrane. It localises to the lamellipodium. The protein localises to the growth cone. The protein resides in the axon. Binds to F-actin and exhibits pH-sensitive F-actin depolymerizing activity. In conjunction with the subcortical maternal complex (SCMC), plays an essential role for zygotes to progress beyond the first embryonic cell divisions via regulation of actin dynamics. Required for the centralization of the mitotic spindle and symmetric division of zygotes. Plays a role in the regulation of cell morphology and cytoskeletal organization in epithelial cells. Required for the up-regulation of atypical chemokine receptor ACKR2 from endosomal compartment to cell membrane, increasing its efficiency in chemokine uptake and degradation. Required for neural tube morphogenesis and neural crest cell migration. This chain is Cofilin-1 (CFL1), found in Homo sapiens (Human).